Reading from the N-terminus, the 186-residue chain is Putative manganese efflux pump MntP (186 aa).

Helical transmembrane passes span 1–21 (MSFL…FAVS), 41–61 (VFFG…GSAV), 71–91 (WIAF…ALYG), 105–125 (LLML…SFAF), 130–150 (ILEP…CGAV), and 165–185 (IIGG…HLLW).

It belongs to the MntP (TC 9.B.29) family.

It localises to the cell membrane. Probably functions as a manganese efflux pump. This chain is Putative manganese efflux pump MntP, found in Methanosarcina barkeri (strain Fusaro / DSM 804).